The primary structure comprises 400 residues: MSHEIFEQAKPILKKIQNKGFKAYFVGGSVRDYIMQRPIHDVDITTSATPDEIESIFDKTIPVGKEHGTINVVFQNDNYEITTFRSEDEYIDHRRPSEVYFVRDLYQDVQRRDFTMNAIAMDLNYRLYDYFNGQQDINNRVIRTVGVPSERFSEDALRIIRGLRFQSQLNFQIDSDTLHAMSSQISDIQYLSVERVVVELKKLIMGNNVKQSFEVMQNMKAFNYIPFFKSFEMSHLHIDEPITFELWIAILIVQQPKDIQLSTLKISNQEKATIKKWVTLIQTLPKIQSKQSLITLVYDYNLNDIEILLSLHHLLKQNGLTTANHLIINEISIREANEKLPIHCRKELAINGKDILNHTNKNSGPWLKDTLREIEIAVISNQIVNTKEEILEWVDAHVKI.

ATP is bound by residues glycine 28 and arginine 31. The CTP site is built by glycine 28 and arginine 31. Mg(2+) is bound by residues aspartate 41 and aspartate 43. Residues arginine 112, aspartate 155, arginine 158, arginine 161, and arginine 164 each coordinate ATP. CTP contacts are provided by arginine 112, aspartate 155, arginine 158, arginine 161, and arginine 164.

This sequence belongs to the tRNA nucleotidyltransferase/poly(A) polymerase family. Bacterial CCA-adding enzyme type 3 subfamily. In terms of assembly, homodimer. Mg(2+) is required as a cofactor.

It catalyses the reaction a tRNA precursor + 2 CTP + ATP = a tRNA with a 3' CCA end + 3 diphosphate. The catalysed reaction is a tRNA with a 3' CCA end + 2 CTP + ATP = a tRNA with a 3' CCACCA end + 3 diphosphate. Its function is as follows. Catalyzes the addition and repair of the essential 3'-terminal CCA sequence in tRNAs without using a nucleic acid template. Adds these three nucleotides in the order of C, C, and A to the tRNA nucleotide-73, using CTP and ATP as substrates and producing inorganic pyrophosphate. tRNA 3'-terminal CCA addition is required both for tRNA processing and repair. Also involved in tRNA surveillance by mediating tandem CCA addition to generate a CCACCA at the 3' terminus of unstable tRNAs. While stable tRNAs receive only 3'-terminal CCA, unstable tRNAs are marked with CCACCA and rapidly degraded. This chain is CCA-adding enzyme, found in Staphylococcus epidermidis (strain ATCC 12228 / FDA PCI 1200).